Reading from the N-terminus, the 387-residue chain is Exodeoxyribonuclease 7 large subunit (387 aa).

It belongs to the XseA family. As to quaternary structure, heterooligomer composed of large and small subunits.

The protein localises to the cytoplasm. The catalysed reaction is Exonucleolytic cleavage in either 5'- to 3'- or 3'- to 5'-direction to yield nucleoside 5'-phosphates.. Functionally, bidirectionally degrades single-stranded DNA into large acid-insoluble oligonucleotides, which are then degraded further into small acid-soluble oligonucleotides. The polypeptide is Exodeoxyribonuclease 7 large subunit (Synechococcus sp. (strain CC9605)).